A 428-amino-acid polypeptide reads, in one-letter code: GTPase Obg (428 aa).

The Obg domain maps to M1–L158. A disordered region spans residues A117 to P145. The OBG-type G domain maps to A159–E329. GTP is bound by residues G165–S172, F190–V194, D212–G215, N282–D285, and S310–V312. 2 residues coordinate Mg(2+): S172 and T192. Residues K350 to D428 enclose the OCT domain.

Belongs to the TRAFAC class OBG-HflX-like GTPase superfamily. OBG GTPase family. In terms of assembly, monomer. Mg(2+) is required as a cofactor.

The protein resides in the cytoplasm. In terms of biological role, an essential GTPase which binds GTP, GDP and possibly (p)ppGpp with moderate affinity, with high nucleotide exchange rates and a fairly low GTP hydrolysis rate. Plays a role in control of the cell cycle, stress response, ribosome biogenesis and in those bacteria that undergo differentiation, in morphogenesis control. The sequence is that of GTPase Obg from Bacillus cereus (strain ATCC 10987 / NRS 248).